The chain runs to 1438 residues: DNA polymerase III PolC-type (1438 aa).

Residues 422–578 (YVVFDVETTG…YDTEATAYIF (157 aa)) enclose the Exonuclease domain.

Belongs to the DNA polymerase type-C family. PolC subfamily.

It localises to the cytoplasm. It carries out the reaction DNA(n) + a 2'-deoxyribonucleoside 5'-triphosphate = DNA(n+1) + diphosphate. Required for replicative DNA synthesis. This DNA polymerase also exhibits 3' to 5' exonuclease activity. The sequence is that of DNA polymerase III PolC-type from Staphylococcus aureus (strain MSSA476).